An 86-amino-acid chain; its full sequence is Cell division topological specificity factor (86 aa).

It belongs to the MinE family.

Functionally, prevents the cell division inhibition by proteins MinC and MinD at internal division sites while permitting inhibition at polar sites. This ensures cell division at the proper site by restricting the formation of a division septum at the midpoint of the long axis of the cell. This is Cell division topological specificity factor from Albidiferax ferrireducens (strain ATCC BAA-621 / DSM 15236 / T118) (Rhodoferax ferrireducens).